A 217-amino-acid chain; its full sequence is Probable transaldolase (217 aa).

K83 acts as the Schiff-base intermediate with substrate in catalysis.

This sequence belongs to the transaldolase family. Type 3B subfamily.

It is found in the cytoplasm. It carries out the reaction D-sedoheptulose 7-phosphate + D-glyceraldehyde 3-phosphate = D-erythrose 4-phosphate + beta-D-fructose 6-phosphate. Its pathway is carbohydrate degradation; pentose phosphate pathway; D-glyceraldehyde 3-phosphate and beta-D-fructose 6-phosphate from D-ribose 5-phosphate and D-xylulose 5-phosphate (non-oxidative stage): step 2/3. Transaldolase is important for the balance of metabolites in the pentose-phosphate pathway. This is Probable transaldolase from Caulobacter vibrioides (strain NA1000 / CB15N) (Caulobacter crescentus).